The sequence spans 308 residues: Ornithine carbamoyltransferase (308 aa).

Residues 50-53 (STRT), Gln-77, Arg-101, and 128-131 (HPCQ) each bind carbamoyl phosphate. L-ornithine contacts are provided by residues Asn-160, Asp-224, and 228 to 229 (SM). Carbamoyl phosphate contacts are provided by residues 264-265 (CL) and Arg-292.

The protein belongs to the aspartate/ornithine carbamoyltransferase superfamily. OTCase family.

Its subcellular location is the cytoplasm. It catalyses the reaction carbamoyl phosphate + L-ornithine = L-citrulline + phosphate + H(+). Its pathway is amino-acid biosynthesis; L-arginine biosynthesis; L-arginine from L-ornithine and carbamoyl phosphate: step 1/3. In terms of biological role, reversibly catalyzes the transfer of the carbamoyl group from carbamoyl phosphate (CP) to the N(epsilon) atom of ornithine (ORN) to produce L-citrulline. This chain is Ornithine carbamoyltransferase, found in Mycobacterium ulcerans (strain Agy99).